A 403-amino-acid polypeptide reads, in one-letter code: Neuromedin U receptor homolog nmur-2 (403 aa).

The Extracellular portion of the chain corresponds to 1–27 (MSQCTVEYNVSEITEYVLSTLGERCQS). A helical transmembrane segment spans residues 28 to 48 (AGIVIPTVIIYGTIFLLGLFG). The Cytoplasmic segment spans residues 49–68 (NICTCIVIAANKSMHNPTNY). Residues 69 to 89 (YLFSLAVSDIIALILGLPMEF) form a helical membrane-spanning segment. Topologically, residues 90–109 (YQSLDYSYPYRFSEGICKAR) are extracellular. The helical transmembrane segment at 110-130 (AFLIEFTSYASIMIICCFSFE) threads the bilayer. Residues 131 to 151 (RWLAICHPLRSKIFSTLWRAN) are Cytoplasmic-facing. Residues 152–172 (VLIILAWTISFVCALPIAFIV) form a helical membrane-spanning segment. Residues 173–216 (QINKLPLPEDAKYQPWTNKVSTDGIFVLHTEFCAMNQSRPDQQK) lie on the Extracellular side of the membrane. The chain crosses the membrane as a helical span at residues 217 to 237 (MIIIFAFTVFFVIPAIAIVIM). Residues 238-268 (YAHIAVQLESSEIDLKGDKMVKKRRNKSNRT) lie on the Cytoplasmic side of the membrane. A helical membrane pass occupies residues 269–289 (VLKMLLSVVITFFICWLPFHI). Topologically, residues 290–304 (QRLLSVYTTWSETTT) are extracellular. The chain crosses the membrane as a helical span at residues 305-325 (ISPPVQFLSMIVFYISGFCYY). Topologically, residues 326–403 (SNSAANPILY…PHRKLEVHNY (78 aa)) are cytoplasmic.

The protein belongs to the G-protein coupled receptor 1 family.

It localises to the membrane. Functionally, putative G protein-coupled receptor for pyrokinin-like neuropeptide derived from the processing of the neuropeptide precursor capa-1. In Caenorhabditis elegans, this protein is Neuromedin U receptor homolog nmur-2.